We begin with the raw amino-acid sequence, 444 residues long: 3-phosphoshikimate 1-carboxyvinyltransferase (444 aa).

3-phosphoshikimate-binding residues include Lys24, Ser25, and Arg29. Phosphoenolpyruvate is bound at residue Lys24. Phosphoenolpyruvate contacts are provided by Gly97 and Arg125. 3-phosphoshikimate-binding residues include Ser170, Gln172, Asp318, and Lys345. Gln172 is a phosphoenolpyruvate binding site. Catalysis depends on Asp318, which acts as the Proton acceptor. The phosphoenolpyruvate site is built by Arg349 and Arg391.

It belongs to the EPSP synthase family. Monomer.

The protein localises to the cytoplasm. It catalyses the reaction 3-phosphoshikimate + phosphoenolpyruvate = 5-O-(1-carboxyvinyl)-3-phosphoshikimate + phosphate. Its pathway is metabolic intermediate biosynthesis; chorismate biosynthesis; chorismate from D-erythrose 4-phosphate and phosphoenolpyruvate: step 6/7. Catalyzes the transfer of the enolpyruvyl moiety of phosphoenolpyruvate (PEP) to the 5-hydroxyl of shikimate-3-phosphate (S3P) to produce enolpyruvyl shikimate-3-phosphate and inorganic phosphate. The chain is 3-phosphoshikimate 1-carboxyvinyltransferase from Halorhodospira halophila (strain DSM 244 / SL1) (Ectothiorhodospira halophila (strain DSM 244 / SL1)).